Reading from the N-terminus, the 819-residue chain is Ion-translocating oxidoreductase complex subunit C (819 aa).

4Fe-4S ferredoxin-type domains lie at 368–398 (EYAEPEAEQACIRCSSCSDACPVNLMPQQLY) and 408–437 (KSEEYALKDCIECGICAYVCPSHIPLIQYF). [4Fe-4S] cluster-binding residues include Cys-378, Cys-381, Cys-384, Cys-388, Cys-417, Cys-420, Cys-423, and Cys-427. Composition is skewed to basic and acidic residues over residues 465–477 (QARMEREEQERKA) and 485–513 (ARREELAQTKGEDPVKAALERLKAKKANE). Disordered regions lie at residues 465 to 568 (QARM…NAKK), 580 to 677 (AKKL…TALD), and 692 to 793 (AKKL…PKKA). 2 stretches are compositionally biased toward polar residues: residues 554–565 (VENQEQQTQPTN) and 587–601 (NSTSEAISNSQTAEN). Basic and acidic residues predominate over residues 602-614 (QVEKTKSAVEKTQ). The segment covering 641–656 (QTNSTSEAISNSQTAE) has biased composition (polar residues). Residues 658 to 671 (EVEKTKSAVEKTEE) show a composition bias toward basic and acidic residues. 2 stretches are compositionally biased toward polar residues: residues 699 to 712 (NSASEAISNSQTAE) and 755 to 768 (NSTSEAISNSQTAE). Positions 770–782 (EVEKTKSAVEKTQ) are enriched in basic and acidic residues.

The protein belongs to the 4Fe4S bacterial-type ferredoxin family. RnfC subfamily. In terms of assembly, the complex is composed of six subunits: RnfA, RnfB, RnfC, RnfD, RnfE and RnfG. Requires [4Fe-4S] cluster as cofactor.

It is found in the cell inner membrane. Functionally, part of a membrane-bound complex that couples electron transfer with translocation of ions across the membrane. The chain is Ion-translocating oxidoreductase complex subunit C from Haemophilus influenzae (strain ATCC 51907 / DSM 11121 / KW20 / Rd).